A 64-amino-acid chain; its full sequence is Neuropeptide-like 4 (64 aa).

An N-terminal signal peptide occupies residues 1–18; sequence MFKLLVVVFAALFAAALA. 2 consecutive propeptides follow at residues 19–40 and 63–64; these read VPAP…EPAP and YG.

It is found in the secreted. The chain is Neuropeptide-like 4 (Nplp4) from Drosophila melanogaster (Fruit fly).